The following is a 1946-amino-acid chain: Sickle tail protein (1946 aa).

Disordered stretches follow at residues 1–83 (MEES…GMQP) and 113–176 (ERLR…VRSA). Over residues 18 to 36 (DSRQMPQQGRSNLHVTSQE) the composition is skewed to polar residues. The span at 38–47 (AACRRPRERL) shows a compositional bias: basic and acidic residues. Position 169 is a phosphoserine (Ser169). Tyr244 is modified (phosphotyrosine). Disordered stretches follow at residues 305-324 (HPPHVIPNSPPSTPVPHSLP) and 339-374 (AIPGNATIPRDRLSSLPVSRSISPSPSAILERRDVK). The span at 308–324 (HVIPNSPPSTPVPHSLP) shows a compositional bias: pro residues. A compositionally biased stretch (low complexity) spans 352–367 (SSLPVSRSISPSPSAI). Residue Ser357 is glycosylated (O-linked (GlcNAc) serine). 2 positions are modified to phosphoserine: Ser361 and Ser365. The residue at position 393 (Tyr393) is a Phosphotyrosine. The interval 455–512 (SRKYPDSHLPTLGSKTPPASPHRVGDLRMIDLHPHLNTHGPPHTLQPDRASPSRQSFK) is disordered. Thr470 carries the post-translational modification Phosphothreonine. A Phosphoserine modification is found at Ser474. Over residues 477 to 488 (RVGDLRMIDLHP) the composition is skewed to basic and acidic residues. Coiled-coil stretches lie at residues 557–581 (RETRERMQAMEKQIASLTGLVQSAL) and 644–685 (TSLL…ELEI). Ser809 carries the post-translational modification Phosphoserine. 2 disordered regions span residues 853-875 (EETAHAPGQPLHCSTGSPGDVKS) and 891-947 (SPVV…PVNG). Polar residues-rich tracts occupy residues 891-909 (SPVVMQPSQHSSALMNPAQ) and 927-947 (QEVTSAQSAPGPQSPQTPVNG). Residues 962 to 990 (SAKNRAVSIEKAEKKWEEKRQNLEHYNGK) are a coiled coil. The tract at residues 1008–1221 (PNLEMPPASS…LRPSGPPKWE (214 aa)) is disordered. A phosphoserine mark is found at Ser1032, Ser1035, Ser1038, and Ser1049. The span at 1049 to 1058 (SPPPPPPPPR) shows a compositional bias: pro residues. The span at 1151-1162 (NPNSHAEQSRAN) shows a compositional bias: polar residues. The segment covering 1176–1194 (PKEKKNLEFYHEDVRKSDV) has biased composition (basic and acidic residues). Ser1466 is subject to Phosphoserine. Positions 1469 to 1495 (FEECDEELERMLTEEKIEEEEEDENED) form a coiled coil. Disordered stretches follow at residues 1482–1567 (EEKI…VDDQ), 1622–1664 (AKRF…RKST), and 1691–1946 (VDTS…KETS). Acidic residues predominate over residues 1484–1495 (KIEEEEEDENED). The segment covering 1498–1508 (VRTSSQMSCEQ) has biased composition (polar residues). 2 stretches are compositionally biased toward basic and acidic residues: residues 1509–1518 (VDSRSDRMGQ) and 1622–1644 (AKRFEITRSQPEDALKTMARRQE). Residues 1659 to 1688 (EIRKSTYRTLDSLEQTIKQLENTISEMSPR) adopt a coiled-coil conformation. Over residues 1739–1759 (KGSSTTPQTSRMPVPMTSKNR) the composition is skewed to polar residues. The residue at position 1741 (Ser1741) is a Phosphoserine. Residues 1765 to 1777 (KASKQSKLQDPRQ) show a composition bias toward basic and acidic residues. Over residues 1806-1825 (ALSPSSGKSSSLPSASGDSS) the composition is skewed to low complexity. Ser1843 is modified (phosphoserine). A compositionally biased stretch (polar residues) spans 1851-1866 (HSASLIPSVSNGSLKF). Residues 1890 to 1899 (AAPTTSSSSS) show a composition bias toward low complexity. Phosphoserine occurs at positions 1899, 1902, and 1905. Positions 1920–1946 (HTPSLASYKAQNGSSSKATPSTAKETS) are enriched in polar residues.

As to quaternary structure, interacts with CPNE4 (via VWFA domain). In terms of tissue distribution, expressed predominantly in the notochord and mesonephros during embryogenesis as well as in other areas such as the epithalamus sulcus, lens vesicle, inner retinal layer, heart, hepatic primordial surface, infundibulum, surface ectoderm, hind gut and limb bud mesenchyme. In adults, expressed in a range of tissues including the nucleus pulposus, corpus callosum, kidney, cardiac muscle, Sertoli cells and hair follicles.

It is found in the cytoplasm. Its subcellular location is the cytoskeleton. The protein localises to the microtubule organizing center. It localises to the centrosome. Required for normal development of intervertebral disks. The sequence is that of Sickle tail protein from Mus musculus (Mouse).